We begin with the raw amino-acid sequence, 252 residues long: Enolase-phosphatase E1 (252 aa).

Mg(2+) is bound by residues Asp-18 and Glu-20. Residues Ser-149–Ser-150 and Lys-184 contribute to the substrate site. Residue Asp-209 coordinates Mg(2+).

It belongs to the HAD-like hydrolase superfamily. MasA/MtnC family. In terms of assembly, monomer. The cofactor is Mg(2+).

Its subcellular location is the cytoplasm. The protein localises to the nucleus. It catalyses the reaction 5-methylsulfanyl-2,3-dioxopentyl phosphate + H2O = 1,2-dihydroxy-5-(methylsulfanyl)pent-1-en-3-one + phosphate. Its pathway is amino-acid biosynthesis; L-methionine biosynthesis via salvage pathway; L-methionine from S-methyl-5-thio-alpha-D-ribose 1-phosphate: step 3/6. It participates in amino-acid biosynthesis; L-methionine biosynthesis via salvage pathway; L-methionine from S-methyl-5-thio-alpha-D-ribose 1-phosphate: step 4/6. Its function is as follows. Bifunctional enzyme that catalyzes the enolization of 2,3-diketo-5-methylthiopentyl-1-phosphate (DK-MTP-1-P) into the intermediate 2-hydroxy-3-keto-5-methylthiopentenyl-1-phosphate (HK-MTPenyl-1-P), which is then dephosphorylated to form the acireductone 1,2-dihydroxy-3-keto-5-methylthiopentene (DHK-MTPene). The polypeptide is Enolase-phosphatase E1 (Naegleria gruberi (Amoeba)).